A 1009-amino-acid chain; its full sequence is Type VII secretion system accessory factor EsaA (1009 aa).

6 consecutive transmembrane segments (helical) span residues 7–27, 822–842, 869–889, 903–923, 928–948, and 979–999; these read IYAL…IFFV, ISPT…AYIF, VITS…VGLI, KFIL…TYLL, SIGM…MNNL, and IGLA…LNMF.

This sequence belongs to the EsaA family. In terms of assembly, homodimer. Interacts with EssB.

Its subcellular location is the cell membrane. Component of the type VII secretion system (Ess). Provides together with EssB and other components such as EssC and EssE a secretion platform across the cytoplasmic membrane in the host. This Staphylococcus aureus (strain MSSA476) protein is Type VII secretion system accessory factor EsaA.